Here is a 155-residue protein sequence, read N- to C-terminus: Protein LOL2 (155 aa).

An N-acetylmethionine modification is found at M1. The tract at residues 1–35 (MEEIQQQTQKEEQKHREEEEEEEEGPPPGWESAVL) is disordered. Putative zinc finger stretches follow at residues 60–90 (QMVCGSCRRLLSYLRGSKHVKCSSCQTVNLV) and 98–128 (QVNCNNCKLLLMYPYGAPAVRCSSCNSVTDI). Positions 130-155 (ENNKRPPWSEQQGPLKSLSSLRRAEN) are disordered. The span at 138–149 (SEQQGPLKSLSS) shows a compositional bias: polar residues.

The protein resides in the nucleus. In terms of biological role, putative zinc finger that may be involved in programmed cell death and defense response. In Arabidopsis thaliana (Mouse-ear cress), this protein is Protein LOL2 (LOL2).